The sequence spans 401 residues: Phosphoglycerate kinase (401 aa).

Substrate is bound by residues 24–26, arginine 40, 63–66, arginine 122, and arginine 155; these read DFN and HFGR. Residues lysine 206, glycine 297, glutamate 328, and 357–360 each bind ATP; that span reads GGDS.

It belongs to the phosphoglycerate kinase family. In terms of assembly, monomer.

The protein resides in the cytoplasm. The enzyme catalyses (2R)-3-phosphoglycerate + ATP = (2R)-3-phospho-glyceroyl phosphate + ADP. It participates in carbohydrate degradation; glycolysis; pyruvate from D-glyceraldehyde 3-phosphate: step 2/5. This Acaryochloris marina (strain MBIC 11017) protein is Phosphoglycerate kinase.